The following is a 485-amino-acid chain: Cysteine--tRNA ligase (485 aa).

Cys-28 lines the Zn(2+) pocket. Residues 30–40 (MTVYDYCHLGH) carry the 'HIGH' region motif. Cys-212, His-237, and Glu-241 together coordinate Zn(2+). The 'KMSKS' region motif lies at 269–273 (KMSKS). Residue Lys-272 participates in ATP binding.

It belongs to the class-I aminoacyl-tRNA synthetase family. As to quaternary structure, monomer. It depends on Zn(2+) as a cofactor.

The protein resides in the cytoplasm. The enzyme catalyses tRNA(Cys) + L-cysteine + ATP = L-cysteinyl-tRNA(Cys) + AMP + diphosphate. This Bordetella bronchiseptica (strain ATCC BAA-588 / NCTC 13252 / RB50) (Alcaligenes bronchisepticus) protein is Cysteine--tRNA ligase.